The primary structure comprises 228 residues: Cytokinin riboside 5'-monophosphate phosphoribohydrolase LOG5 (228 aa).

Substrate-binding positions include Glu79, 97-98 (RK), and 114-120 (GYGTLEE).

It belongs to the LOG family. In terms of tissue distribution, expressed in roots and shoots. Detected in vascular tissues of roots, cotyledons, and leaves, axillary buds, immature and mature flowers, fruit abscission zones and ovules.

It localises to the cytoplasm. Its subcellular location is the nucleus. It carries out the reaction N(6)-(dimethylallyl)adenosine 5'-phosphate + H2O = N(6)-dimethylallyladenine + D-ribose 5-phosphate. It catalyses the reaction 9-ribosyl-trans-zeatin 5'-phosphate + H2O = trans-zeatin + D-ribose 5-phosphate. Cytokinin-activating enzyme working in the direct activation pathway. Phosphoribohydrolase that converts inactive cytokinin nucleotides to the biologically active free-base forms. The chain is Cytokinin riboside 5'-monophosphate phosphoribohydrolase LOG5 (LOG5) from Arabidopsis thaliana (Mouse-ear cress).